The sequence spans 698 residues: Phenylalanine aminomutase (L-beta-phenylalanine forming) (698 aa).

Y80 acts as the Proton donor/acceptor in catalysis. The 5-imidazolinone (Ala-Gly) cross-link spans 175–177; it reads ASG. S176 carries the 2,3-didehydroalanine (Ser) modification. Residues N231, Q319, R325, N355, K427, E455, and N458 each contribute to the (E)-cinnamate site.

This sequence belongs to the PAL/histidase family. In terms of assembly, homotetramer. In terms of processing, contains an active site 4-methylidene-imidazol-5-one (MIO), which is formed autocatalytically by cyclization and dehydration of residues Ala-Ser-Gly.

Its subcellular location is the cytoplasm. The catalysed reaction is L-phenylalanine = L-beta-phenylalanine. The enzyme catalyses L-phenylalanine = (E)-cinnamate + NH4(+). It participates in alkaloid biosynthesis; taxol biosynthesis. It functions in the pathway phenylpropanoid metabolism; trans-cinnamate biosynthesis; trans-cinnamate from L-phenylalanine: step 1/1. Its function is as follows. Phenylalanine aminomutase that catalyzes the rearrangement of L-phenylalanine to R-beta-phenylalanine. Catalyzes the first committed step in the biosynthesis of the side chain of the alkaloid taxol (paclitaxel), a widely-used compound with antitumor activity. Also has low phenylalanine ammonia-lyase activity. This chain is Phenylalanine aminomutase (L-beta-phenylalanine forming) (pam), found in Taxus canadensis (Canadian yew).